The sequence spans 483 residues: MGDVIVLYASPGMGHIVSMVELGKFIVHRYGPHKFSITILYTCGSIVDTASIPVYIRRISHSHPFISFRQFPRVTNNITRNISVPAITFDFIRQNDPHVRSALQEISKSATVRAFIIDLFCTSALPIGKEFNIPTYYFRTSGAAILAAFLYLPKIDEQTKTTESFKDLRDTVFEFPGWKSPLKATHMVQLVLDRNDPAYSDMIYFCSHLPKSNGIIVNTFEELEPPSVLQAIAGGLCVPDGPTPPVYYVGPLIEEEKELSKDADAAEKEDCLSWLDKQPSRSVLFLCFGSMGSFPAAQLKEIANGLEASGQRFLWVVKKPPVEEKSKQVHGVDDFDLKGVLPEGFLERTADRGMVVKSWAPQVVVLKKESVGGFVTHCGWNSVLEAVVAGVPMIAWPLYAEQHMNRNVLVTDMEIAIGVEQRDEEGGFVSGEEVERRVRELMESEGGRVLRERCKKLGEMASAALGETGSSTRNLVNFVSSIT.

His15 serves as the catalytic Proton acceptor. His15 is an an anthocyanidin binding site. Asp118 functions as the Charge relay in the catalytic mechanism. UDP-alpha-D-glucose contacts are provided by Thr140, Ala360, Gln362, His377, Trp380, Asn381, Ser382, and Glu385. Residue Ala400 participates in an anthocyanidin binding. UDP-alpha-D-glucose-binding residues include Glu401 and Gln402.

Belongs to the UDP-glycosyltransferase family.

It carries out the reaction phloretin + UDP-alpha-D-glucose = phlorizin + UDP + H(+). In terms of biological role, glycosyltransferase that possesses phloretin 2'-O-glycosyltransferase activity. Converts phloretin to phlorizin (phloretin 2'-O-glucoside), a potent antioxidant. Is specific for phloretin and does not possess glycosyltransferase activity toward caffeic acid, catechin, chlorogenic acid, 2-coumaric acid, 3-coumaric acid, 4-coumaric acid, cyanidin, 3,4-dihydroxyhydrocinnamic acid, epicatechin, 3-hydroxybenzoic acid, naringenin, 3,4-dihydroxybenzoic acid, quercetin and rutin. Can glycosylate phloretin in the presence of UDP-glucose, UDP-xylose and UDP-galactose. This is Phloretin 2'-O-glucosyltransferase from Malus domestica (Apple).